We begin with the raw amino-acid sequence, 185 residues long: UPF0200 protein TON_1344 (185 aa).

7–14 (GMPGSGKS) lines the ATP pocket.

This sequence belongs to the UPF0200 family.

This Thermococcus onnurineus (strain NA1) protein is UPF0200 protein TON_1344.